The sequence spans 270 residues: Formamidopyrimidine-DNA glycosylase (270 aa).

The active-site Schiff-base intermediate with DNA is Pro2. The active-site Proton donor is Glu3. The active-site Proton donor; for beta-elimination activity is the Lys58. DNA-binding residues include His91, Arg109, and Arg151. The segment at 236–270 (MVYNRQEEPCRLCGTPIRQIRQGQRSTYYCPLCQP) adopts an FPG-type zinc-finger fold. The active-site Proton donor; for delta-elimination activity is the Arg260.

The protein belongs to the FPG family. In terms of assembly, monomer. The cofactor is Zn(2+).

It catalyses the reaction Hydrolysis of DNA containing ring-opened 7-methylguanine residues, releasing 2,6-diamino-4-hydroxy-5-(N-methyl)formamidopyrimidine.. The enzyme catalyses 2'-deoxyribonucleotide-(2'-deoxyribose 5'-phosphate)-2'-deoxyribonucleotide-DNA = a 3'-end 2'-deoxyribonucleotide-(2,3-dehydro-2,3-deoxyribose 5'-phosphate)-DNA + a 5'-end 5'-phospho-2'-deoxyribonucleoside-DNA + H(+). Involved in base excision repair of DNA damaged by oxidation or by mutagenic agents. Acts as a DNA glycosylase that recognizes and removes damaged bases. Has a preference for oxidized purines, such as 7,8-dihydro-8-oxoguanine (8-oxoG). Has AP (apurinic/apyrimidinic) lyase activity and introduces nicks in the DNA strand. Cleaves the DNA backbone by beta-delta elimination to generate a single-strand break at the site of the removed base with both 3'- and 5'-phosphates. In Chromobacterium violaceum (strain ATCC 12472 / DSM 30191 / JCM 1249 / CCUG 213 / NBRC 12614 / NCIMB 9131 / NCTC 9757 / MK), this protein is Formamidopyrimidine-DNA glycosylase.